Reading from the N-terminus, the 213-residue chain is Ras-related protein Rab-4B (213 aa).

Ala-2 carries the N-acetylalanine modification. GDP is bound by residues Gly-18, Thr-19, Gly-20, Lys-21, Ser-22, and Cys-23. GTP contacts are provided by Gly-18, Thr-19, Gly-20, Lys-21, Ser-22, Cys-23, Ser-37, His-39, and Thr-40. Ser-22 is a binding site for Mg(2+). The short motif at 39–44 (HTIGVE) is the Switch 1 element. Residues Thr-40 and Asp-63 each coordinate Mg(2+). The Switch 2 signature appears at 65–74 (AGQERFRSVT). Residue Gly-66 participates in GTP binding. A 5-glutamyl serotonin modification is found at Gln-67. GDP contacts are provided by Asn-121, Lys-122, Asp-124, Ala-152, and Leu-153. Asn-121, Lys-122, Asp-124, Ala-152, and Leu-153 together coordinate GTP. Ser-185 and Ser-193 each carry phosphoserine. 2 S-geranylgeranyl cysteine lipidation sites follow: Cys-211 and Cys-213. Residue Cys-213 is modified to Cysteine methyl ester.

It belongs to the small GTPase superfamily. Rab family. As to quaternary structure, interacts (GTP-bound form) with RUFY1; the interaction allows endosomal tethering and fusion. Requires Mg(2+) as cofactor. In terms of processing, serotonylation of Gln-67 by TGM2 during activation and aggregation of platelets leads to constitutive activation of GTPase activity.

It localises to the cell membrane. Its subcellular location is the early endosome membrane. The enzyme catalyses GTP + H2O = GDP + phosphate + H(+). With respect to regulation, regulated by guanine nucleotide exchange factors (GEFs) which promote the exchange of bound GDP for free GTP. Regulated by GTPase activating proteins (GAPs) which increase the GTP hydrolysis activity. Inhibited by GDP dissociation inhibitors (GDIs). In terms of biological role, the small GTPases Rab are key regulators of intracellular membrane trafficking, from the formation of transport vesicles to their fusion with membranes. Rabs cycle between an inactive GDP-bound form and an active GTP-bound form that is able to recruit to membranes different set of downstream effectors directly responsible for vesicle formation, movement, tethering and fusion. RAB4B mediates endosomal tethering and fusion through the interaction with RUFY1 and RAB14. Acts as a regulator of platelet alpha-granule release during activation and aggregation of platelets. The polypeptide is Ras-related protein Rab-4B (Mus musculus (Mouse)).